Here is an 85-residue protein sequence, read N- to C-terminus: Sec-independent protein translocase protein TatA (85 aa).

The helical transmembrane segment at 1-21 (MGIFDWKHWLIILIVVVLVFG) threads the bilayer. Positions 43–85 (VNTEEGENRPAEPQTGTSAGDTLNKTQTIEGQAQKVDTPVRKD) are disordered. Positions 56–73 (QTGTSAGDTLNKTQTIEG) are enriched in polar residues.

This sequence belongs to the TatA/E family. As to quaternary structure, the Tat system comprises two distinct complexes: a TatABC complex, containing multiple copies of TatA, TatB and TatC subunits, and a separate TatA complex, containing only TatA subunits. Substrates initially bind to the TatABC complex, which probably triggers association of the separate TatA complex to form the active translocon.

Its subcellular location is the cell inner membrane. In terms of biological role, part of the twin-arginine translocation (Tat) system that transports large folded proteins containing a characteristic twin-arginine motif in their signal peptide across membranes. TatA could form the protein-conducting channel of the Tat system. The polypeptide is Sec-independent protein translocase protein TatA (Azotobacter vinelandii (strain DJ / ATCC BAA-1303)).